A 295-amino-acid chain; its full sequence is Putative enoyl reductase C646.07c (295 aa).

Over 1-84 the chain is Cytoplasmic; it reads MSITLSSRGR…KDLGPQIGWR (84 aa). A helical membrane pass occupies residues 85 to 105; it reads TVFMIEYLGPLVIHLFFILNY. The Lumenal segment spans residues 106–157; it reads KWIYRKDYNLCLNQKIAFVLVMLHFMKREYESIFVHRFSLATMPLRNIFKNC. Residues 158-178 form a helical membrane-spanning segment; the sequence is AHYHLLSGLFLAYFIYGPWHA. Topologically, residues 179-186 are cytoplasmic; sequence NDYIKPNH. Residues 187 to 207 traverse the membrane as a helical segment; the sequence is LLFLIVGWAFAVLSNFRTHII. At 208–223 the chain is on the lumenal side; the sequence is LRDLRPAGSKKRVIPT. The helical transmembrane segment at 224-246 threads the bilayer; the sequence is GYGFNLVSFPNYFFESLGWLFFA. The Cytoplasmic portion of the chain corresponds to 247 to 250; that stretch reads LLTK. Residues 251-268 form a helical membrane-spanning segment; sequence SWASWIFLFVGSAQMFVW. Over 269–295 the chain is Lumenal; sequence AKKKHARYLKEFPNYPRSRKIMIPFFL.

This sequence belongs to the steroid 5-alpha reductase family.

It localises to the endoplasmic reticulum membrane. It carries out the reaction a (2E)-enoyl-CoA + NADPH + H(+) = a 2,3-saturated acyl-CoA + NADP(+). The protein is Putative enoyl reductase C646.07c of Schizosaccharomyces pombe (strain 972 / ATCC 24843) (Fission yeast).